The chain runs to 378 residues: Spermidine/putrescine import ATP-binding protein PotA (378 aa).

Residues 18–248 form the ABC transporter domain; the sequence is VLLSGISKSF…PKNLFVAGFI (231 aa). 50-57 lines the ATP pocket; it reads GPSGCGKT.

It belongs to the ABC transporter superfamily. Spermidine/putrescine importer (TC 3.A.1.11.1) family. In terms of assembly, the complex is composed of two ATP-binding proteins (PotA), two transmembrane proteins (PotB and PotC) and a solute-binding protein (PotD).

It localises to the cell inner membrane. The enzyme catalyses ATP + H2O + polyamine-[polyamine-binding protein]Side 1 = ADP + phosphate + polyamineSide 2 + [polyamine-binding protein]Side 1.. In terms of biological role, part of the ABC transporter complex PotABCD involved in spermidine/putrescine import. Responsible for energy coupling to the transport system. This chain is Spermidine/putrescine import ATP-binding protein PotA, found in Salmonella paratyphi A (strain ATCC 9150 / SARB42).